A 261-amino-acid polypeptide reads, in one-letter code: Adenosylcobinamide-GDP ribazoletransferase (261 aa).

Helical transmembrane passes span 31 to 51 (YAICFFPLIGAVIGGVFFLTF), 59 to 79 (LGDILIAALLTSIPILISGGI), 125 to 145 (FGMVSVLTLKSSIIIAIFFVV), 183 to 203 (VIYLVITVIGMLLVSPILTVV), and 240 to 260 (LMAGLAVVIAEGVIIYGTGHW).

The protein belongs to the CobS family. The cofactor is Mg(2+).

The protein resides in the cell membrane. It catalyses the reaction alpha-ribazole + adenosylcob(III)inamide-GDP = adenosylcob(III)alamin + GMP + H(+). The enzyme catalyses alpha-ribazole 5'-phosphate + adenosylcob(III)inamide-GDP = adenosylcob(III)alamin 5'-phosphate + GMP + H(+). It participates in cofactor biosynthesis; adenosylcobalamin biosynthesis; adenosylcobalamin from cob(II)yrinate a,c-diamide: step 7/7. Joins adenosylcobinamide-GDP and alpha-ribazole to generate adenosylcobalamin (Ado-cobalamin). Also synthesizes adenosylcobalamin 5'-phosphate from adenosylcobinamide-GDP and alpha-ribazole 5'-phosphate. The chain is Adenosylcobinamide-GDP ribazoletransferase from Lachnoclostridium phytofermentans (strain ATCC 700394 / DSM 18823 / ISDg) (Clostridium phytofermentans).